A 352-amino-acid chain; its full sequence is Protein MGF 360-9L (352 aa).

Belongs to the asfivirus MGF 360 family. As to quaternary structure, interacts with host STAT1; this interaction mediates STAT1 degradation through apoptosis. Interacts with host STAT2; this interaction mediates STAT2 degradation through the proteasome.

The protein resides in the host cytoplasm. In terms of biological role, plays a role in virus cell tropism, and may be required for efficient virus replication in macrophages. In addition, inhibits IFN-beta-induced IFN-stimulated genes (ISGs) transcription. Mechanistically, degrades host STAT1 and STAT2 through apoptosis and ubiquitin-proteasome pathways respectively. The sequence is that of Protein MGF 360-9L from Ornithodoros (relapsing fever ticks).